A 236-amino-acid chain; its full sequence is Truncated formate dehydrogenase 2 (236 aa).

NAD(+) contacts are provided by residues 36 to 37 (RI), D57, 104 to 108 (PLHKD), T130, D156, and 185 to 188 (HISG).

The protein belongs to the D-isomer specific 2-hydroxyacid dehydrogenase family. FDH subfamily.

The protein is Truncated formate dehydrogenase 2 of Saccharomyces cerevisiae (strain ATCC 204508 / S288c) (Baker's yeast).